The following is a 977-amino-acid chain: uncharacterized protein (977 aa).

Positions 1 to 24 (MMQQRSGSLSLLSNAVQAGQSSDP) are enriched in polar residues. Positions 1–65 (MMQQRSGSLS…HEKTKAGKDR (65 aa)) are disordered. The segment at residues 72–99 (CQSCRKKKVKCSGERPSCDQCLKHNIPC) is a DNA-binding region (zn(2)-C6 fungal-type). Residues 176–195 (LSHPTIVPSSNSSSLLNSTN) form a disordered region. The span at 177–195 (SHPTIVPSSNSSSLLNSTN) shows a compositional bias: low complexity. Ser220 carries the post-translational modification Phosphoserine. Disordered stretches follow at residues 287 to 307 (TDSLSIVSNPSQTPAKFDSNR), 357 to 380 (NSASSGLSTSYTNNNDTTSDNNSL), and 751 to 774 (HTPINVTNGESQNNSNNDPSANGA). Residues 364-379 (STSYTNNNDTTSDNNS) show a composition bias toward low complexity. A compositionally biased stretch (polar residues) spans 751–770 (HTPINVTNGESQNNSNNDPS).

It localises to the cytoplasm. It is found in the nucleus. This is an uncharacterized protein from Schizosaccharomyces pombe (strain 972 / ATCC 24843) (Fission yeast).